Reading from the N-terminus, the 321-residue chain is Lipoyl synthase (321 aa).

Residues Cys68, Cys73, Cys79, Cys94, Cys98, Cys101, and Ser308 each coordinate [4Fe-4S] cluster. In terms of domain architecture, Radical SAM core spans 80–297; that stretch reads FNHGTATFMI…KAEAMAMGFT (218 aa).

The protein belongs to the radical SAM superfamily. Lipoyl synthase family. Requires [4Fe-4S] cluster as cofactor.

Its subcellular location is the cytoplasm. It carries out the reaction [[Fe-S] cluster scaffold protein carrying a second [4Fe-4S](2+) cluster] + N(6)-octanoyl-L-lysyl-[protein] + 2 oxidized [2Fe-2S]-[ferredoxin] + 2 S-adenosyl-L-methionine + 4 H(+) = [[Fe-S] cluster scaffold protein] + N(6)-[(R)-dihydrolipoyl]-L-lysyl-[protein] + 4 Fe(3+) + 2 hydrogen sulfide + 2 5'-deoxyadenosine + 2 L-methionine + 2 reduced [2Fe-2S]-[ferredoxin]. Its pathway is protein modification; protein lipoylation via endogenous pathway; protein N(6)-(lipoyl)lysine from octanoyl-[acyl-carrier-protein]: step 2/2. Functionally, catalyzes the radical-mediated insertion of two sulfur atoms into the C-6 and C-8 positions of the octanoyl moiety bound to the lipoyl domains of lipoate-dependent enzymes, thereby converting the octanoylated domains into lipoylated derivatives. The sequence is that of Lipoyl synthase from Pectobacterium atrosepticum (strain SCRI 1043 / ATCC BAA-672) (Erwinia carotovora subsp. atroseptica).